We begin with the raw amino-acid sequence, 249 residues long: Type III pantothenate kinase (249 aa).

An ATP-binding site is contributed by 6-13 (DCGNSFIK). Residues Y93 and 100-103 (GLDR) contribute to the substrate site. The active-site Proton acceptor is the D102. A K(+)-binding site is contributed by D122. Residue T125 coordinates ATP. A substrate-binding site is contributed by T181.

It belongs to the type III pantothenate kinase family. In terms of assembly, homodimer. The cofactor is NH4(+). K(+) is required as a cofactor.

The protein localises to the cytoplasm. It catalyses the reaction (R)-pantothenate + ATP = (R)-4'-phosphopantothenate + ADP + H(+). It functions in the pathway cofactor biosynthesis; coenzyme A biosynthesis; CoA from (R)-pantothenate: step 1/5. Its function is as follows. Catalyzes the phosphorylation of pantothenate (Pan), the first step in CoA biosynthesis. This chain is Type III pantothenate kinase, found in Pseudomonas fluorescens (strain SBW25).